We begin with the raw amino-acid sequence, 560 residues long: Proline--tRNA ligase (560 aa).

This sequence belongs to the class-II aminoacyl-tRNA synthetase family. ProS type 1 subfamily. In terms of assembly, homodimer.

The protein localises to the cytoplasm. The enzyme catalyses tRNA(Pro) + L-proline + ATP = L-prolyl-tRNA(Pro) + AMP + diphosphate. Catalyzes the attachment of proline to tRNA(Pro) in a two-step reaction: proline is first activated by ATP to form Pro-AMP and then transferred to the acceptor end of tRNA(Pro). As ProRS can inadvertently accommodate and process non-cognate amino acids such as alanine and cysteine, to avoid such errors it has two additional distinct editing activities against alanine. One activity is designated as 'pretransfer' editing and involves the tRNA(Pro)-independent hydrolysis of activated Ala-AMP. The other activity is designated 'posttransfer' editing and involves deacylation of mischarged Ala-tRNA(Pro). The misacylated Cys-tRNA(Pro) is not edited by ProRS. This chain is Proline--tRNA ligase, found in Vesicomyosocius okutanii subsp. Calyptogena okutanii (strain HA).